The primary structure comprises 1788 residues: Protein Shroom3 (1788 aa).

16 disordered regions span residues 1 to 25 (MMQV…STSD), 146 to 174 (EVNS…HGRL), 225 to 263 (KAAG…ESSP), 321 to 367 (GAKS…KQEG), 382 to 401 (PDIS…PLRL), 469 to 488 (NIAS…QADH), 498 to 548 (TVHA…GNKL), 727 to 768 (EISP…VTPT), 793 to 821 (TAEQ…APLT), 876 to 915 (TGRR…SMNS), 1011 to 1067 (SRRH…SASN), 1086 to 1133 (SFKN…PETK), 1171 to 1263 (KRGK…SEAE), 1303 to 1324 (DTES…PPSL), 1404 to 1467 (VPAP…AKSQ), and 1507 to 1538 (ALKE…KRET). Polar residues-rich tracts occupy residues 147 to 161 (VNSS…SRQP) and 230 to 240 (HSTNTSSNAAQ). Composition is skewed to basic and acidic residues over residues 245 to 259 (VHGD…ERSP) and 357 to 366 (SVKEREKKQE). Basic and acidic residues predominate over residues 476 to 488 (NKMDERSNRQADH). The ASD1 domain occupies 708–811 (VKDAQCKVLE…SEPEKMNEVG (104 aa)). Over residues 793–808 (TAEQKKRSYSEPEKMN) the composition is skewed to basic and acidic residues. Residues 893-903 (QSTYFSGSIMD) are compositionally biased toward polar residues. Low complexity predominate over residues 904 to 915 (NQSMTSTSSMNS). Polar residues-rich tracts occupy residues 1055 to 1067 (EVGN…SASN), 1100 to 1124 (ENSS…SISG), and 1211 to 1263 (TSAQ…SEAE). Positions 1313 to 1323 (PPSPPPFPPPS) are enriched in pro residues. Positions 1433-1451 (SILQSSEGNFNPSDSQSTL) are enriched in polar residues. One can recognise an ASD2 domain in the interval 1467–1756 (QELAKEIVTK…QLRCLTESLP (290 aa)). The span at 1529-1538 (SEXKEEKRET) shows a compositional bias: basic and acidic residues. Residues 1653–1708 (RLARVENALSSLGEDASAEERKTWNEKKKQLCGQHEDARELKENLDRREKLVMDFL) are a coiled coil.

Belongs to the shroom family. As to quaternary structure, interacts with F-actin. Interacts with ROCK1. As to expression, expressed in epithelial cells of the cement gland.

The protein resides in the cell junction. It is found in the adherens junction. Its subcellular location is the cytoplasm. It localises to the cytoskeleton. The protein localises to the apical cell membrane. Its function is as follows. Controls cell shape changes in the neuroepithelium during neural tube closure. Induces apical constriction in epithelial cells by promoting the apical accumulation of F-actin and myosin II, and probably by bundling stress fibers. Induces apicobasal cell elongation by redistributing gamma-tubulin and directing the assembly of robust apicobasal microtubule arrays. The chain is Protein Shroom3 (shroom3) from Xenopus laevis (African clawed frog).